We begin with the raw amino-acid sequence, 101 residues long: Enhancer of yellow 2 transcription factor (101 aa).

It belongs to the ENY2 family. As to quaternary structure, component of the nuclear pore complex (NPC)-associated AMEX complex (anchoring and mRNA export complex), composed of at least e(y)2 and xmas-2. Component of the SAGA transcription coactivator-HAT complexes, at least composed of Ada2b, e(y)2, Pcaf/Gcn5, Taf10 and Nipped-A/Trrap. Within the SAGA complex, e(y)2, Sgf11, and not/nonstop form an additional subcomplex of SAGA called the DUB module (deubiquitination module). Component of the THO complex, composed of at least e(y)2, HPR1, THO2, THOC5, THOC6 and THOC7. Interacts with e(y)1. Interacts with su(Hw) (via zinc fingers). Interacts with xmas-2; required for localization to the nuclear periphery. Interacts with the nuclear pore complex (NPC).

The protein localises to the nucleus. It localises to the nucleoplasm. Its subcellular location is the cytoplasm. Its function is as follows. Involved in mRNA export coupled transcription activation by association with both the AMEX and the SAGA complexes. The SAGA complex is a multiprotein complex that activates transcription by remodeling chromatin and mediating histone acetylation and deubiquitination. Within the SAGA complex, participates in a subcomplex that specifically deubiquitinates histone H2B. The SAGA complex is recruited to specific gene promoters by activators, where it is required for transcription. Required for nuclear receptor-mediated transactivation. Involved in transcription elongation by recruiting the THO complex onto nascent mRNA. The AMEX complex functions in docking export-competent ribonucleoprotein particles (mRNPs) to the nuclear entrance of the nuclear pore complex (nuclear basket). AMEX participates in mRNA export and accurate chromatin positioning in the nucleus by tethering genes to the nuclear periphery. This Drosophila simulans (Fruit fly) protein is Enhancer of yellow 2 transcription factor.